The primary structure comprises 149 residues: D-aminoacyl-tRNA deacylase (149 aa).

The short motif at G137 to P138 is the Gly-cisPro motif, important for rejection of L-amino acids element.

Belongs to the DTD family. As to quaternary structure, homodimer.

It localises to the cytoplasm. The enzyme catalyses glycyl-tRNA(Ala) + H2O = tRNA(Ala) + glycine + H(+). It carries out the reaction a D-aminoacyl-tRNA + H2O = a tRNA + a D-alpha-amino acid + H(+). Functionally, an aminoacyl-tRNA editing enzyme that deacylates mischarged D-aminoacyl-tRNAs. Also deacylates mischarged glycyl-tRNA(Ala), protecting cells against glycine mischarging by AlaRS. Acts via tRNA-based rather than protein-based catalysis; rejects L-amino acids rather than detecting D-amino acids in the active site. By recycling D-aminoacyl-tRNA to D-amino acids and free tRNA molecules, this enzyme counteracts the toxicity associated with the formation of D-aminoacyl-tRNA entities in vivo and helps enforce protein L-homochirality. This Desulfotalea psychrophila (strain LSv54 / DSM 12343) protein is D-aminoacyl-tRNA deacylase.